The chain runs to 421 residues: 4-hydroxy-3-methylbut-2-en-1-yl diphosphate synthase (flavodoxin) (421 aa).

Positions 311, 314, 357, and 364 each coordinate [4Fe-4S] cluster.

This sequence belongs to the IspG family. It depends on [4Fe-4S] cluster as a cofactor.

The catalysed reaction is (2E)-4-hydroxy-3-methylbut-2-enyl diphosphate + oxidized [flavodoxin] + H2O + 2 H(+) = 2-C-methyl-D-erythritol 2,4-cyclic diphosphate + reduced [flavodoxin]. Its pathway is isoprenoid biosynthesis; isopentenyl diphosphate biosynthesis via DXP pathway; isopentenyl diphosphate from 1-deoxy-D-xylulose 5-phosphate: step 5/6. Functionally, converts 2C-methyl-D-erythritol 2,4-cyclodiphosphate (ME-2,4cPP) into 1-hydroxy-2-methyl-2-(E)-butenyl 4-diphosphate. In Xanthomonas oryzae pv. oryzae (strain MAFF 311018), this protein is 4-hydroxy-3-methylbut-2-en-1-yl diphosphate synthase (flavodoxin).